The following is a 304-amino-acid chain: Putative ankyrin repeat protein R602 (304 aa).

6 ANK repeats span residues L82–F117, N118–A146, D147–C176, D178–A206, G207–D236, and S238–T266.

The protein is Putative ankyrin repeat protein R602 of Acanthamoeba polyphaga (Amoeba).